The chain runs to 76 residues: Translation initiation factor IF-1 (76 aa).

The S1-like domain occupies 1–76 (MEDMAKKDGV…TRGRIVYRYK (76 aa)).

The protein belongs to the IF-1 family. Component of the 30S ribosomal translation pre-initiation complex which assembles on the 30S ribosome in the order IF-2 and IF-3, IF-1 and N-formylmethionyl-tRNA(fMet); mRNA recruitment can occur at any time during PIC assembly.

The protein resides in the cytoplasm. One of the essential components for the initiation of protein synthesis. Stabilizes the binding of IF-2 and IF-3 on the 30S subunit to which N-formylmethionyl-tRNA(fMet) subsequently binds. Helps modulate mRNA selection, yielding the 30S pre-initiation complex (PIC). Upon addition of the 50S ribosomal subunit IF-1, IF-2 and IF-3 are released leaving the mature 70S translation initiation complex. This is Translation initiation factor IF-1 from Renibacterium salmoninarum (strain ATCC 33209 / DSM 20767 / JCM 11484 / NBRC 15589 / NCIMB 2235).